The sequence spans 154 residues: Crossover junction endodeoxyribonuclease RuvC (154 aa).

Active-site residues include Asp-7, Glu-67, and Asp-139. Residues Asp-7, Glu-67, and Asp-139 each coordinate Mg(2+).

Belongs to the RuvC family. In terms of assembly, homodimer which binds Holliday junction (HJ) DNA. The HJ becomes 2-fold symmetrical on binding to RuvC with unstacked arms; it has a different conformation from HJ DNA in complex with RuvA. In the full resolvosome a probable DNA-RuvA(4)-RuvB(12)-RuvC(2) complex forms which resolves the HJ. It depends on Mg(2+) as a cofactor.

The protein resides in the cytoplasm. It carries out the reaction Endonucleolytic cleavage at a junction such as a reciprocal single-stranded crossover between two homologous DNA duplexes (Holliday junction).. The RuvA-RuvB-RuvC complex processes Holliday junction (HJ) DNA during genetic recombination and DNA repair. Endonuclease that resolves HJ intermediates. Cleaves cruciform DNA by making single-stranded nicks across the HJ at symmetrical positions within the homologous arms, yielding a 5'-phosphate and a 3'-hydroxyl group; requires a central core of homology in the junction. The consensus cleavage sequence is 5'-(A/T)TT(C/G)-3'. Cleavage occurs on the 3'-side of the TT dinucleotide at the point of strand exchange. HJ branch migration catalyzed by RuvA-RuvB allows RuvC to scan DNA until it finds its consensus sequence, where it cleaves and resolves the cruciform DNA. This chain is Crossover junction endodeoxyribonuclease RuvC, found in Prochlorococcus marinus (strain NATL2A).